The sequence spans 339 residues: MAPLVPSSQPWVEKYRPRQVKDVAHQEEVVRVLTTTLQTADLPHMLFYGPPGTGKTTTALAIAYQLYGPELYKSRVLELNASDDRGINVVRTKIKDFAAVAVGSARKGGYPCPPYKIIILDEADSMTEDAQNALRRTMETYSKVTRFFFICNYISRIIEPLASRCAKFRFKPLSEEVMSNRILHICNEEGLSLDAQALATLSTISNGDLRRAITYLQSAARLFGSSISSTDLISVSGAIPEDVVKSLLASCKSGEFDVANKEVNNIIADGYPVSQLISQFLDVIVNADDIPDEQKARICKKLGEADKCLVDGADEYLQLLDVASETIRALFDMPQTLVF.

Tyr48–Lys55 contacts ATP.

Belongs to the activator 1 small subunits family. In terms of assembly, heterotetramer of subunits RFC2, RFC3, RFC4 and RFC5 that can form a complex with RFC1. As to expression, expressed in roots, leaves, shoot apical meristem (SAM), flag leaves and panicles.

It localises to the nucleus. Its function is as follows. May be involved in DNA replication and thus regulate cell proliferation. In Oryza sativa subsp. japonica (Rice), this protein is Replication factor C subunit 2 (RFC2).